We begin with the raw amino-acid sequence, 514 residues long: Ankyrin repeat domain-containing protein 34B (514 aa).

ANK repeat units lie at residues 9-38, 42-79, 83-113, and 117-146; these read SEGN…YINE, RGET…DPNI, SGKT…DLSL, and SSYS…AKGK. The disordered stretch occupies residues 220–249; sequence NDDTWDPGSPVRKPALAPKGPKLPHAPPWV. Serine 263 is modified (phosphoserine). At threonine 272 the chain carries Phosphothreonine. Serine 296 is subject to Phosphoserine.

It belongs to the ANKRD34 family. Phosphorylated.

The protein resides in the cytoplasm. It localises to the nucleus. This is Ankyrin repeat domain-containing protein 34B (ANKRD34B) from Homo sapiens (Human).